The chain runs to 269 residues: GTP cyclohydrolase FolE2 (269 aa).

It belongs to the GTP cyclohydrolase IV family.

The enzyme catalyses GTP + H2O = 7,8-dihydroneopterin 3'-triphosphate + formate + H(+). The protein operates within cofactor biosynthesis; 7,8-dihydroneopterin triphosphate biosynthesis; 7,8-dihydroneopterin triphosphate from GTP: step 1/1. Converts GTP to 7,8-dihydroneopterin triphosphate. This is GTP cyclohydrolase FolE2 from Burkholderia multivorans (strain ATCC 17616 / 249).